A 429-amino-acid polypeptide reads, in one-letter code: Histidine--tRNA ligase (429 aa).

Belongs to the class-II aminoacyl-tRNA synthetase family. As to quaternary structure, homodimer.

It is found in the cytoplasm. It catalyses the reaction tRNA(His) + L-histidine + ATP = L-histidyl-tRNA(His) + AMP + diphosphate + H(+). This chain is Histidine--tRNA ligase, found in Streptococcus pneumoniae (strain Hungary19A-6).